A 312-amino-acid chain; its full sequence is Ribosomal protein L11 methyltransferase (312 aa).

S-adenosyl-L-methionine contacts are provided by T163, G184, D206, and N248.

This sequence belongs to the methyltransferase superfamily. PrmA family.

The protein localises to the cytoplasm. The enzyme catalyses L-lysyl-[protein] + 3 S-adenosyl-L-methionine = N(6),N(6),N(6)-trimethyl-L-lysyl-[protein] + 3 S-adenosyl-L-homocysteine + 3 H(+). Functionally, methylates ribosomal protein L11. The protein is Ribosomal protein L11 methyltransferase of Clostridium botulinum (strain Hall / ATCC 3502 / NCTC 13319 / Type A).